The sequence spans 168 residues: MEPPNLYPVKLYVYDLSKGLARRLSPIMLGKQLEGIWHTSIVVHKDEFFFGSSGISSCTPGGTLLGPPDSVVDVGNTEVTEEIFLEYLSSLGESLFRGEAYNLFEHNCNTFSNEVAQFLTGRKIPSYITDLPSEVLSTPFGQALRPFLDSIQIQPPGGNSVGRPNGQS.

The 143-residue stretch at 7–149 folds into the PPPDE domain; sequence YPVKLYVYDL…FGQALRPFLD (143 aa). Histidine 38 is a catalytic residue. Residues 83–91 carry the Nuclear export signal 1 motif; it reads IFLEYLSSL. Cysteine 108 is an active-site residue. A Nuclear export signal 2 motif is present at residues 139–153; sequence PFGQALRPFLDSIQI.

This sequence belongs to the DeSI family. In terms of assembly, homodimer. Interacts with UBQLN4; leading to the export of UBQLN4 from the nucleus.

The protein localises to the cytoplasm. The protein resides in the nucleus. It catalyses the reaction S-hexadecanoyl-L-cysteinyl-[protein] + H2O = L-cysteinyl-[protein] + hexadecanoate + H(+). Its function is as follows. Protease which deconjugates SUMO1, SUMO2 and SUMO3 from some substrate proteins. Has isopeptidase but not SUMO-processing activity. Desumoylates ZBTB46. Collaborates with UBQLN4 in the export of ubiquitinated proteins from the nucleus to the cytoplasm. Exhibits palmitoyl protein thioesterase (S-depalmitoylation) activity towards synthetic substrates 4-methylumbelliferyl-6-S-palmitoyl-beta-D-glucopyranoside and S-depalmitoylation probe 5 (DPP-5). This is Desumoylating isopeptidase 1 (Desi1) from Rattus norvegicus (Rat).